The chain runs to 69 residues: Cytochrome c oxidase subunit 8A, mitochondrial (69 aa).

Residues Met-1 to Lys-25 constitute a mitochondrion transit peptide. Positions Ser-2–Leu-19 match the SIFI-degron motif. Over Ile-26–Gly-36 the chain is Mitochondrial matrix. A helical transmembrane segment spans residues Ile-37–Ser-60. The Mitochondrial intermembrane segment spans residues His-61–Glu-69.

The protein belongs to the cytochrome c oxidase VIII family. In terms of assembly, component of the cytochrome c oxidase (complex IV, CIV), a multisubunit enzyme composed of 14 subunits. The complex is composed of a catalytic core of 3 subunits MT-CO1, MT-CO2 and MT-CO3, encoded in the mitochondrial DNA, and 11 supernumerary subunits COX4I1 (or COX4I2), COX5A, COX5B, COX6A1 (or COX6A2), COX6B1 (or COX6B2), COX6C, COX7A2 (or COX7A1), COX7B, COX7C, COX8A and NDUFA4, which are encoded in the nuclear genome. The complex exists as a monomer or a dimer and forms supercomplexes (SCs) in the inner mitochondrial membrane with NADH-ubiquinone oxidoreductase (complex I, CI) and ubiquinol-cytochrome c oxidoreductase (cytochrome b-c1 complex, complex III, CIII), resulting in different assemblies (supercomplex SCI(1)III(2)IV(1) and megacomplex MCI(2)III(2)IV(2)). In response to mitochondrial stress, the precursor protein is ubiquitinated by the SIFI complex in the cytoplasm before mitochondrial import, leading to its degradation. Within the SIFI complex, UBR4 initiates ubiquitin chain that are further elongated or branched by KCMF1. Widely expressed.

It localises to the mitochondrion inner membrane. Its pathway is energy metabolism; oxidative phosphorylation. Its function is as follows. Component of the cytochrome c oxidase, the last enzyme in the mitochondrial electron transport chain which drives oxidative phosphorylation. The respiratory chain contains 3 multisubunit complexes succinate dehydrogenase (complex II, CII), ubiquinol-cytochrome c oxidoreductase (cytochrome b-c1 complex, complex III, CIII) and cytochrome c oxidase (complex IV, CIV), that cooperate to transfer electrons derived from NADH and succinate to molecular oxygen, creating an electrochemical gradient over the inner membrane that drives transmembrane transport and the ATP synthase. Cytochrome c oxidase is the component of the respiratory chain that catalyzes the reduction of oxygen to water. Electrons originating from reduced cytochrome c in the intermembrane space (IMS) are transferred via the dinuclear copper A center (CU(A)) of subunit 2 and heme A of subunit 1 to the active site in subunit 1, a binuclear center (BNC) formed by heme A3 and copper B (CU(B)). The BNC reduces molecular oxygen to 2 water molecules using 4 electrons from cytochrome c in the IMS and 4 protons from the mitochondrial matrix. This chain is Cytochrome c oxidase subunit 8A, mitochondrial (COX8A), found in Homo sapiens (Human).